The primary structure comprises 21 residues: Hemolymph 65 kDa lectin BG04 (21 aa).

As to expression, hemolymph.

Its subcellular location is the secreted. In terms of biological role, binds and precipitates antigens of the parasite Echinostoma paraensei. The chain is Hemolymph 65 kDa lectin BG04 (BG04) from Biomphalaria glabrata (Bloodfluke planorb).